We begin with the raw amino-acid sequence, 213 residues long: THAP domain-containing protein 1 (213 aa).

The THAP-type zinc-finger motif lies at 1 to 81 (MVQSCSAYGC…LKENAVPTIF (81 aa)). Residues 134–137 (DHNY) carry the HCFC1-binding motif (HBM) motif. The tract at residues 139-185 (VEDTMHQRKRIHQLEQQVEKLRKKLKTAQQRCRRQERQLEKLKEVVH) is involved in homodimer formation. Residues 139–190 (VEDTMHQRKRIHQLEQQVEKLRKKLKTAQQRCRRQERQLEKLKEVVHFQKEK) are a coiled coil.

This sequence belongs to the THAP1 family. In terms of assembly, homodimer. Interacts with PAWR. Component of a THAP1/THAP3-HCFC1-OGT complex that contains, either THAP1 or THAP3, HCFC1 and OGT. Interacts with OGT. Interacts (via the HBM) with HCFC1 (via the Kelch-repeat domain); the interaction recruits HCFC1 to the RRM1 promoter. In terms of tissue distribution, highly expressed in heart, skeletal muscle, kidney and liver. Weaker expression in brain and placenta.

It localises to the nucleus. It is found in the nucleoplasm. The protein localises to the PML body. Its function is as follows. DNA-binding transcription regulator that regulates endothelial cell proliferation and G1/S cell-cycle progression. Specifically binds the 5'-[AT]NTNN[GT]GGCA[AGT]-3' core DNA sequence and acts by modulating expression of pRB-E2F cell-cycle target genes, including RRM1. Component of a THAP1/THAP3-HCFC1-OGT complex that is required for the regulation of the transcriptional activity of RRM1. May also have pro-apoptotic activity by potentiating both serum-withdrawal and TNF-induced apoptosis. In Homo sapiens (Human), this protein is THAP domain-containing protein 1 (THAP1).